We begin with the raw amino-acid sequence, 854 residues long: MLNPLNFITKFIKSSNQKELDRINKIVVKVNSLEASVKNLSDEDFPKKTTELKDKLKNGENLDTLLPEAFALVREASKRTRNERHHDVQILGGVVLHEGKIAEMRTGEGKTLTISLAAYLNALTEEGVHIVTVNDYLAKRDSQEMGEIYKFLGLTFGFINNDQDDLERKKNYNFDITYATNSELGFDYLRDNMKFSKEQMVQRGHVYTIVDEIDSCLIDEARTPLVISGAAEDKTEQYLAIDKLIKRLLPEHYEIDEKDRNILLTNEGINNVEKIFSDAGILKNNNFYDPENLSLVHHVNQSLRAHHLFEKGKDYIVKDGTLKIIDELTGRILEGRRFGDGLHQALEAKERIDVQAENQTLASITYQNYFKLYNKISGCTGTAATESQEFYEIYNLVVVIIPTNKEMIRKDWNDQIFRTEEEKNKAIIEKVLECHKQGQPILVFTSSINKSEIYSKLLNDEKIKHVVLNAKNHENEAEIIANAGKMNSVIITTSISGRGVDIQLGGKKGSQPDDELLENKNKIKSLGGLFVIGTERMESRRVDNQARGRAGRQGDEGSSIFYVSLEDDLMRIFGSESMNNILQKLGLKDGESIDHPWINKALERAQQKVEARNFDIRKNLLKFDDVLNDQRHVIFSQRNGVMNSEKVFDYSDEFLSEIISHLISLKTQKLSTTKNNEFNNQLKTLLGKSVDDNEFKNVTELKDEEFKNKINSKFLEARNERIKMLDEEKAKEVEKRIFLQCIDLNWKSHIQYLEQLRQVIGLRSYGQRDPLVEYKKEAFFLFENLLNKLKMDFVTILINLKIVQEPSESISRPLKKETSNDPNCLLIKRKNEKISRNEKCEATGKKFKNCCGAL.

ATP-binding positions include Gln89, 107–111, and Asp501; that span reads GEGKT.

This sequence belongs to the SecA family. As to quaternary structure, monomer and homodimer. Part of the essential Sec protein translocation apparatus which comprises SecA, SecYEG and auxiliary proteins SecDF-YajC and YidC.

The protein localises to the cell inner membrane. The protein resides in the cytoplasm. The catalysed reaction is ATP + H2O + cellular proteinSide 1 = ADP + phosphate + cellular proteinSide 2.. Part of the Sec protein translocase complex. Interacts with the SecYEG preprotein conducting channel. Has a central role in coupling the hydrolysis of ATP to the transfer of proteins into and across the cell membrane, serving both as a receptor for the preprotein-SecB complex and as an ATP-driven molecular motor driving the stepwise translocation of polypeptide chains across the membrane. The sequence is that of Protein translocase subunit SecA from Pelagibacter ubique (strain HTCC1062).